Here is a 218-residue protein sequence, read N- to C-terminus: Ras-related protein Rab-11B (218 aa).

Residue Gly-2 is modified to N-acetylglycine. The residue at position 4 (Arg-4) is a Citrulline. GTP contacts are provided by Ser-20, Gly-21, Gly-23, Lys-24, Ser-25, Asn-26, Asn-37, Leu-38, Ser-40, Ser-42, and Thr-43. Position 25 (Ser-25) interacts with Mg(2+). The Switch 1 signature appears at 36 to 47; that stretch reads FNLESKSTIGVE. Residues Thr-43 and Asp-66 each contribute to the Mg(2+) site. A Switch 2 motif is present at residues 67-86; sequence TAGQERYRAITSAYYRGAVG. Gly-69, Asn-124, Lys-125, Asp-127, Ala-155, and Leu-156 together coordinate GTP. The interval 184 to 218 is disordered; that stretch reads RAAHDESPGNNVVDISVPPTTDGQKPNKLQCCQNL. S-geranylgeranyl cysteine attachment occurs at residues Cys-214 and Cys-215. At Cys-215 the chain carries Cysteine methyl ester. Positions 216–218 are cleaved as a propeptide — removed in mature form; the sequence is QNL.

This sequence belongs to the small GTPase superfamily. Rab family. Interacts with KCNMA1. Interacts with RAB11FIP1, RAB11FIP2, RAB11FIP3 and RAB11FIP4. May interact with TBC1D14. Interacts with ATP6V1E1. Interacts with PI4KB. Interacts (GDP-bound form) with ZFYVE27. Interacts (GDP-bound form) with KIF5A in a ZFYVE27-dependent manner. Interacts with RELCH. Interacts (in GTP-bound form) with TBC1D8B (via domain Rab-GAP TBC). Forms a complex containing RAB11B, ASAP1, Rabin8/RAB3IP, RAP11FIP3 and ARF4. Interacts with WDR44. It depends on Mg(2+) as a cofactor. Citrullinated by PADI4. In terms of processing, (Microbial infection) Glycosylated on arginine residues by S.typhimurium protein Ssek3.

It is found in the recycling endosome membrane. The protein resides in the cytoplasmic vesicle. It localises to the secretory vesicle. The protein localises to the synaptic vesicle membrane. Its subcellular location is the phagosome membrane. It catalyses the reaction GTP + H2O = GDP + phosphate + H(+). With respect to regulation, regulated by guanine nucleotide exchange factors (GEFs) which promote the exchange of bound GDP for free GTP. Regulated by GTPase activating proteins (GAPs) which increase the GTP hydrolysis activity. Inhibited by GDP dissociation inhibitors (GDIs) which prevent Rab-GDP dissociation. In terms of biological role, the small GTPases Rab are key regulators of intracellular membrane trafficking, from the formation of transport vesicles to their fusion with membranes. Rabs cycle between an inactive GDP-bound form and an active GTP-bound form that is able to recruit to membranes different set of downstream effectors directly responsible for vesicle formation, movement, tethering and fusion. The small Rab GTPase RAB11B plays a role in endocytic recycling, regulating apical recycling of several transmembrane proteins including cystic fibrosis transmembrane conductance regulator/CFTR, epithelial sodium channel/ENaC, potassium voltage-gated channel, and voltage-dependent L-type calcium channel. May also regulate constitutive and regulated secretion, like insulin granule exocytosis. Required for melanosome transport and release from melanocytes. Also regulates V-ATPase intracellular transport in response to extracellular acidosis. Promotes Rabin8/RAB3IP preciliary vesicular trafficking to mother centriole by forming a ciliary targeting complex containing Rab11, ASAP1, Rabin8/RAB3IP, RAB11FIP3 and ARF4, thereby regulating ciliogenesis initiation. On the contrary, upon LPAR1 receptor signaling pathway activation, interaction with phosphorylated WDR44 prevents Rab11-RAB3IP-RAB11FIP3 complex formation and cilia growth. The sequence is that of Ras-related protein Rab-11B from Homo sapiens (Human).